The chain runs to 342 residues: Pyridoxal 4-dehydrogenase (342 aa).

D56 is an active-site residue. Y61 functions as the Proton donor in the catalytic mechanism. K86 is an active-site residue. G245–P255 contacts NADP(+).

This sequence belongs to the aldo/keto reductase family. In terms of assembly, homodimer.

The enzyme catalyses pyridoxal + NAD(+) = 4-pyridoxolactone + NADH + H(+). The protein operates within cofactor degradation; B6 vitamer degradation; 4-pyridoxate from pyridoxal: step 1/2. The chain is Pyridoxal 4-dehydrogenase (pld1) from Microbacterium luteolum (Aureobacterium luteolum).